Here is a 422-residue protein sequence, read N- to C-terminus: tRNA hydroxylation protein P (422 aa).

Positions 1–58 (MNQVELLSPAGNLKKLKIALNYGADAVYGGVSHFSLRNRAGKEFTLETFKEGIDYAHA) are cleaved as a signal peptide.

Belongs to the peptidase U32 family.

Functionally, involved in prephenate-dependent formation of 5-hydroxyuridine (ho5U) modification at position 34 in tRNAs, the first step in 5-carboxymethoxyuridine (cmo5U) biosynthesis. In Helicobacter pylori (strain ATCC 700392 / 26695) (Campylobacter pylori), this protein is tRNA hydroxylation protein P.